A 320-amino-acid chain; its full sequence is Glutaminyl-peptide cyclotransferase (320 aa).

The span at 1-12 (MATRSPYKRQTK) shows a compositional bias: basic residues. Residues 1-22 (MATRSPYKRQTKRSMIQSLPAS) are disordered. At 1–36 (MATRSPYKRQTKRSMIQSLPASSSASSRRRFISRKR) the chain is on the cytoplasmic side. A helical; Signal-anchor for type II membrane protein membrane pass occupies residues 37 to 57 (FAMMIPLALLSGAVFLFFMPF). The Lumenal segment spans residues 58–320 (NSWGQSSGSS…GNYIEQQCLV (263 aa)). N99 and N163 each carry an N-linked (GlcNAc...) asparagine glycan.

Belongs to the plant glutaminyl-peptide cyclotransferase family. In terms of processing, glycosylated.

The protein resides in the endoplasmic reticulum membrane. The enzyme catalyses N-terminal L-glutaminyl-[peptide] = N-terminal 5-oxo-L-prolyl-[peptide] + NH4(+). Functionally, converts glutamine and N-terminal glutamyl residues in peptides to 5-oxoproline and 5-oxoproline residues. Not involved in the major pathway for 5-oxoproline production. This is Glutaminyl-peptide cyclotransferase (QCT) from Arabidopsis thaliana (Mouse-ear cress).